Reading from the N-terminus, the 1412-residue chain is DNA-directed RNA polymerase subunit beta' (1412 aa).

The Zn(2+) site is built by cysteine 70, cysteine 72, cysteine 85, and cysteine 88. Mg(2+) is bound by residues aspartate 460, aspartate 462, and aspartate 464. Residues cysteine 819, cysteine 893, cysteine 900, and cysteine 903 each contribute to the Zn(2+) site. The tract at residues 1392–1412 (EEAFEFGTPSTPAEEPQHPAE) is disordered.

It belongs to the RNA polymerase beta' chain family. As to quaternary structure, the RNAP catalytic core consists of 2 alpha, 1 beta, 1 beta' and 1 omega subunit. When a sigma factor is associated with the core the holoenzyme is formed, which can initiate transcription. It depends on Mg(2+) as a cofactor. Requires Zn(2+) as cofactor.

It carries out the reaction RNA(n) + a ribonucleoside 5'-triphosphate = RNA(n+1) + diphosphate. Functionally, DNA-dependent RNA polymerase catalyzes the transcription of DNA into RNA using the four ribonucleoside triphosphates as substrates. The sequence is that of DNA-directed RNA polymerase subunit beta' from Burkholderia thailandensis (strain ATCC 700388 / DSM 13276 / CCUG 48851 / CIP 106301 / E264).